The primary structure comprises 257 residues: Trans-aconitate 2-methyltransferase (257 aa).

It belongs to the methyltransferase superfamily. Tam family.

It localises to the cytoplasm. The enzyme catalyses trans-aconitate + S-adenosyl-L-methionine = (E)-3-(methoxycarbonyl)pent-2-enedioate + S-adenosyl-L-homocysteine. Functionally, catalyzes the S-adenosylmethionine monomethyl esterification of trans-aconitate. This Sinorhizobium fredii (strain NBRC 101917 / NGR234) protein is Trans-aconitate 2-methyltransferase.